The primary structure comprises 209 residues: MEQPRKAVVVTGFGPFGEHTVNASWIAVQELEKLGLGDSVDLHVYEIPVEYQTVQRLIPALWEKHSPQLVVHVGVSGMATTVTLEKCGHNKGYKGLDNCRFCPGSQCCVEDGPESIDSIIDMDAVCKRVTTLGLDVSVTISQDAGRYLCDFTYYTSLYQSHGRSAFVHVPPLGKPYNADQLGRALRAIIEEMLDLLEQSEGKINYCHKH.

Catalysis depends on residues Glu-85, Cys-149, and His-168.

Belongs to the peptidase C15 family. Monomer.

Its subcellular location is the cytoplasm. It catalyses the reaction Release of an N-terminal pyroglutamyl group from a polypeptide, the second amino acid generally not being Pro.. Its activity is regulated as follows. Inhibited by transition metal ions including Ni(2+), Zn(2+), and Cu(2+) and by sulfhydryl-blocking agents. Removes 5-oxoproline from various penultimate amino acid residues except L-proline. The polypeptide is Pyroglutamyl-peptidase 1 (PGPEP1) (Homo sapiens (Human)).